The chain runs to 193 residues: dCTP deaminase (193 aa).

DCTP-binding positions include 110–115 (RSSLAR), aspartate 128, 136–138 (VLE), tyrosine 171, lysine 178, and glutamine 182. The Proton donor/acceptor role is filled by glutamate 138.

Belongs to the dCTP deaminase family. As to quaternary structure, homotrimer.

It catalyses the reaction dCTP + H2O + H(+) = dUTP + NH4(+). It functions in the pathway pyrimidine metabolism; dUMP biosynthesis; dUMP from dCTP (dUTP route): step 1/2. Catalyzes the deamination of dCTP to dUTP. This Aeromonas hydrophila subsp. hydrophila (strain ATCC 7966 / DSM 30187 / BCRC 13018 / CCUG 14551 / JCM 1027 / KCTC 2358 / NCIMB 9240 / NCTC 8049) protein is dCTP deaminase.